The chain runs to 188 residues: Putative manganese efflux pump MntP (188 aa).

Transmembrane regions (helical) follow at residues 3–23 (FYAL…VALA), 35–55 (IAAT…AGWV), 63–83 (FISE…GLKM), 107–127 (VLTA…LAFM), 131–151 (IAFA…VGLA), and 167–187 (AGGL…LGLI).

This sequence belongs to the MntP (TC 9.B.29) family.

Its subcellular location is the cell inner membrane. Probably functions as a manganese efflux pump. The protein is Putative manganese efflux pump MntP of Neisseria meningitidis serogroup A / serotype 4A (strain DSM 15465 / Z2491).